Here is a 164-residue protein sequence, read N- to C-terminus: Arginine repressor (164 aa).

It belongs to the ArgR family.

It localises to the cytoplasm. Its pathway is amino-acid biosynthesis; L-arginine biosynthesis [regulation]. Functionally, regulates arginine biosynthesis genes. The sequence is that of Arginine repressor from Mycolicibacterium paratuberculosis (strain ATCC BAA-968 / K-10) (Mycobacterium paratuberculosis).